A 148-amino-acid chain; its full sequence is uncharacterized protein (148 aa).

One can recognise an HTH asnC-type domain in the interval 4–65 (LDRVDMQLVK…IPDIDKLGYM (62 aa)). The H-T-H motif DNA-binding region spans 23 to 42 (YRELADILNTTRQRIARRID).

This is an uncharacterized protein from Pyrococcus horikoshii (strain ATCC 700860 / DSM 12428 / JCM 9974 / NBRC 100139 / OT-3).